A 348-amino-acid polypeptide reads, in one-letter code: Protein RecA (348 aa).

64-71 (GPESSGKT) lines the ATP pocket. Residues 325–335 (YEIDGANKEPL) are compositionally biased toward basic and acidic residues. Residues 325–348 (YEIDGANKEPLEETEETLSLLDDE) form a disordered region. Residues 336–348 (EETEETLSLLDDE) are compositionally biased toward acidic residues.

It belongs to the RecA family.

Its subcellular location is the cytoplasm. Functionally, can catalyze the hydrolysis of ATP in the presence of single-stranded DNA, the ATP-dependent uptake of single-stranded DNA by duplex DNA, and the ATP-dependent hybridization of homologous single-stranded DNAs. It interacts with LexA causing its activation and leading to its autocatalytic cleavage. The protein is Protein RecA of Listeria welshimeri serovar 6b (strain ATCC 35897 / DSM 20650 / CCUG 15529 / CIP 8149 / NCTC 11857 / SLCC 5334 / V8).